The following is a 195-amino-acid chain: uncharacterized protein (195 aa).

The HTH tetR-type domain occupies Val6–Val66. Positions Lys29–Phe48 form a DNA-binding region, H-T-H motif.

This is an uncharacterized protein from Bacillus subtilis (strain 168).